The primary structure comprises 445 residues: MGSSADTETAMIIATPASNHNNPATNGGDANQNHTSGAILALTNSESDASKKRRMGVLPLEVGTRVMCQWRDGKYHPVKVIERRKNYNGGHNDYEYYVHYTEFNRRLDEWIKLEQLDLDSVECALDEKVEDKVTSLKMTRHQKRKIDETHVEGHEELDAASLREHEEFTKVKNIATIELGKYEIETWYFSPFPPEYNDCVKLFFCEFCLSFMKRKEQLQRHMRKCDLKHPPGDEIYRSSTLSMFEVDGKKNKVYAQNLCYLAKLFLDHKTLYYDVDLFLFYILCECDDRGCHMVGYFSKEKHSEEAYNLACILTLPPYQRKGYGKFLIAFSYELSKKEGKVGTPERPLSDLGLVSYRGYWTRILLDILKKHKGNISIKELSDMTAIKAEDILSTLQSLELIQYRKGQHVICADPKVLDRHLKAAGRGGLDVDVSKMIWTPYKEQS.

Residues 60–118 (LEVGTRVMCQWRDGKYHPVKVIERRKNYNGGHNDYEYYVHYTEFNRRLDEWIKLEQLDL) enclose the Tudor-knot domain. Positions 169–440 (TKVKNIATIE…VDVSKMIWTP (272 aa)) constitute an MYST-type HAT domain. Residues 202–227 (LFFCEFCLSFMKRKEQLQRHMRKCDL) form a C2HC MYST-type zinc finger. N6-acetyllysine; by autocatalysis is present on Lys-269. Residues 312–314 (ILT) and 319–325 (QRKGYGK) each bind acetyl-CoA. Catalysis depends on Glu-345, which acts as the Proton donor/acceptor. Ser-349 serves as a coordination point for acetyl-CoA.

This sequence belongs to the MYST (SAS/MOZ) family. Interacts with MRG1 and MRG2. Component of the NuA4 histone acetyltransferase complex. Post-translationally, autoacetylation at Lys-269 is required for proper function. Expressed in cotyledons, leaves, stems, roots and, at higher levels in developing flowers, particularly in the anthers and gynoecia. Constitutively expressed in all tissues, predominantly in shoot apical meristem.

It is found in the nucleus. The catalysed reaction is L-lysyl-[protein] + acetyl-CoA = N(6)-acetyl-L-lysyl-[protein] + CoA + H(+). In terms of biological role, histone acetyltransferase which may be involved in transcriptional activation. Acetylates 'Lys-5' of histone H4 (H4K5ac). Essential for gametophyte development. Involved in DNA repair after UV-B exposure. Negative regulator of flowering controlling the H4K5ac levels in the FLC chromatin. The sequence is that of Histone acetyltransferase of the MYST family 1 from Arabidopsis thaliana (Mouse-ear cress).